The chain runs to 195 residues: MRRASISRQTAETEISVDINLDGTGAYDNQTGVGFFDHMLDQLARHSLIDMTISAKGDYHIDDHHTVEDTGIALGQALSAALGDKRGIRRYGECHLPMDDAQVRCALDLSGRPFLVWNVDLPTAKIGTFDTELVREFFQAFSTHGGITLHVDQLHGLNSHHIAEAAFKAVARALRQAVESDPRKGDAIPSTKGTL.

The protein belongs to the imidazoleglycerol-phosphate dehydratase family.

It is found in the cytoplasm. It carries out the reaction D-erythro-1-(imidazol-4-yl)glycerol 3-phosphate = 3-(imidazol-4-yl)-2-oxopropyl phosphate + H2O. It functions in the pathway amino-acid biosynthesis; L-histidine biosynthesis; L-histidine from 5-phospho-alpha-D-ribose 1-diphosphate: step 6/9. The chain is Imidazoleglycerol-phosphate dehydratase from Ruegeria pomeroyi (strain ATCC 700808 / DSM 15171 / DSS-3) (Silicibacter pomeroyi).